We begin with the raw amino-acid sequence, 396 residues long: Ribosomal RNA large subunit methyltransferase I (396 aa).

Residues 2 to 79 (AIRIKLKPGR…REEEIDREFF (78 aa)) enclose the PUA domain.

It belongs to the methyltransferase superfamily. RlmI family.

Its subcellular location is the cytoplasm. It catalyses the reaction cytidine(1962) in 23S rRNA + S-adenosyl-L-methionine = 5-methylcytidine(1962) in 23S rRNA + S-adenosyl-L-homocysteine + H(+). Functionally, specifically methylates the cytosine at position 1962 (m5C1962) of 23S rRNA. This is Ribosomal RNA large subunit methyltransferase I from Shewanella baltica (strain OS155 / ATCC BAA-1091).